The primary structure comprises 232 residues: Ubiquinone biosynthesis O-methyltransferase (232 aa).

Residues arginine 36, glycine 55, aspartate 76, and methionine 120 each coordinate S-adenosyl-L-methionine.

Belongs to the methyltransferase superfamily. UbiG/COQ3 family.

The catalysed reaction is a 3-demethylubiquinol + S-adenosyl-L-methionine = a ubiquinol + S-adenosyl-L-homocysteine + H(+). It catalyses the reaction a 3-(all-trans-polyprenyl)benzene-1,2-diol + S-adenosyl-L-methionine = a 2-methoxy-6-(all-trans-polyprenyl)phenol + S-adenosyl-L-homocysteine + H(+). It functions in the pathway cofactor biosynthesis; ubiquinone biosynthesis. Its function is as follows. O-methyltransferase that catalyzes the 2 O-methylation steps in the ubiquinone biosynthetic pathway. The chain is Ubiquinone biosynthesis O-methyltransferase from Paraburkholderia phytofirmans (strain DSM 17436 / LMG 22146 / PsJN) (Burkholderia phytofirmans).